A 142-amino-acid polypeptide reads, in one-letter code: AP-2 complex subunit sigma (142 aa).

This sequence belongs to the adaptor complexes small subunit family. As to quaternary structure, adaptor protein complex 2 (AP-2) is a heterotetramer composed of two large adaptins (alpha-type and beta-type subunits), a medium adaptin (mu-type subunit) and a small adaptin (sigma-type subunit).

It is found in the cell membrane. It localises to the membrane. The protein resides in the coated pit. Its function is as follows. Subunit of the adaptor protein complex 2 (AP-2). Adaptor protein complexes function in protein transport via transport vesicles in different membrane traffic pathways. Adaptor protein complexes are vesicle coat components and appear to be involved in cargo selection and vesicle formation. AP-2 is involved in clathrin-dependent endocytosis in which cargo proteins are incorporated into vesicles surrounded by clathrin (clathrin-coated vesicles, CCVs) which are destined for fusion with the early endosome. The complex binds polyphosphoinositides. The protein is AP-2 complex subunit sigma (AP17) of Arabidopsis thaliana (Mouse-ear cress).